The sequence spans 326 residues: Phosphotriesterase homology protein (326 aa).

6 residues coordinate Zn(2+): His-22, His-24, Lys-145, His-178, His-207, and Asp-264. An N6-carboxylysine modification is found at Lys-145.

Belongs to the metallo-dependent hydrolases superfamily. Phosphotriesterase family. Requires Zn(2+) as cofactor.

This is Phosphotriesterase homology protein (php) from Mycobacterium tuberculosis (strain CDC 1551 / Oshkosh).